Consider the following 532-residue polypeptide: Membrane protein insertase YidC (532 aa).

Transmembrane regions (helical) follow at residues 6–26 (IVLAIILSLVVFLGWHSFAEY), 317–337 (AIDFGMFSIIAKPLLTALTFF), 342–362 (GNWGVAIIVLTLCIKIVFWPL), 411–431 (GGCLPILLQIPVFIGLYQALL), 451–473 (VWLADLSAADPFYITPLLMGASM), and 496–516 (PIIFTVMFLNFPAGLVIYWLF).

The protein belongs to the OXA1/ALB3/YidC family. Type 1 subfamily. Interacts with the Sec translocase complex via SecD. Specifically interacts with transmembrane segments of nascent integral membrane proteins during membrane integration.

The protein resides in the cell membrane. In terms of biological role, required for the insertion and/or proper folding and/or complex formation of integral membrane proteins into the membrane. Involved in integration of membrane proteins that insert both dependently and independently of the Sec translocase complex, as well as at least some lipoproteins. Aids folding of multispanning membrane proteins. This chain is Membrane protein insertase YidC, found in Lawsonia intracellularis (strain PHE/MN1-00).